The sequence spans 431 residues: DNA polymerase delta subunit 2 (431 aa).

This sequence belongs to the DNA polymerase delta/II small subunit family. In terms of assembly, component of both the DNA polymerase delta and DNA polymerase zeta complexes. The DNA polymerase delta complex consisting of three subunits: the catalytic subunit PolD1 and two accessory subunits PolD2/Pol31 and PolD3/Pol32. Within the delta complex, interacts with both PolD1 and PolD3, and is able to interact with PolD1 in the absence of PolD3. Component of the DNA polymerase zeta complex consisting of four subunits: the catalytic subunit PolZ1 and three accessory subunits PolZ2/Rev7, PolD2/Pol31 and PolD3/Pol32. As to expression, expressed in ovaries and embryos (at the protein level).

It is found in the nucleus. Its subcellular location is the nucleoplasm. Its function is as follows. Accessory component of both the DNA polymerase delta complex and possibly the DNA polymerase zeta complex. As a component of the delta complex, participates in high fidelity genome replication, including lagging strand synthesis, DNA recombination and repair. Appears to promote the function of the DNA pol-delta complex accessory subunit PolD3 in both embryonic and postembryonic somatic cells. In Drosophila melanogaster (Fruit fly), this protein is DNA polymerase delta subunit 2.